Reading from the N-terminus, the 672-residue chain is tRNA 5-methylaminomethyl-2-thiouridine biosynthesis bifunctional protein MnmC (672 aa).

Residues 1–235 (MTRVLEPAEP…KRDMTVARFA (235 aa)) form a tRNA (mnm(5)s(2)U34)-methyltransferase region. The segment at 259 to 672 (IGAGLAGCAV…SAGPGVDAAG (414 aa)) is FAD-dependent cmnm(5)s(2)U34 oxidoreductase.

It in the N-terminal section; belongs to the methyltransferase superfamily. tRNA (mnm(5)s(2)U34)-methyltransferase family. This sequence in the C-terminal section; belongs to the DAO family. FAD is required as a cofactor.

It localises to the cytoplasm. It carries out the reaction 5-aminomethyl-2-thiouridine(34) in tRNA + S-adenosyl-L-methionine = 5-methylaminomethyl-2-thiouridine(34) in tRNA + S-adenosyl-L-homocysteine + H(+). Functionally, catalyzes the last two steps in the biosynthesis of 5-methylaminomethyl-2-thiouridine (mnm(5)s(2)U) at the wobble position (U34) in tRNA. Catalyzes the FAD-dependent demodification of cmnm(5)s(2)U34 to nm(5)s(2)U34, followed by the transfer of a methyl group from S-adenosyl-L-methionine to nm(5)s(2)U34, to form mnm(5)s(2)U34. This is tRNA 5-methylaminomethyl-2-thiouridine biosynthesis bifunctional protein MnmC from Cupriavidus metallidurans (strain ATCC 43123 / DSM 2839 / NBRC 102507 / CH34) (Ralstonia metallidurans).